The following is a 390-amino-acid chain: Dihydroorotase (390 aa).

Positions 54 and 56 each coordinate Zn(2+). Residues 56-58 (HIR) and Asn-88 contribute to the substrate site. Zn(2+) contacts are provided by Lys-136, His-160, His-197, and Asp-259. N6-carboxylysine is present on Lys-136. The active site involves Asp-259. Substrate-binding positions include His-263 and 277 to 278 (PG).

This sequence belongs to the metallo-dependent hydrolases superfamily. DHOase family. Class I DHOase subfamily. Zn(2+) serves as cofactor.

It carries out the reaction (S)-dihydroorotate + H2O = N-carbamoyl-L-aspartate + H(+). The protein operates within pyrimidine metabolism; UMP biosynthesis via de novo pathway; (S)-dihydroorotate from bicarbonate: step 3/3. Its function is as follows. Catalyzes the reversible cyclization of carbamoyl aspartate to dihydroorotate. This is Dihydroorotase from Saccharolobus solfataricus (strain ATCC 35092 / DSM 1617 / JCM 11322 / P2) (Sulfolobus solfataricus).